The sequence spans 151 residues: Ribosome maturation factor RimP (151 aa).

The protein belongs to the RimP family.

It localises to the cytoplasm. In terms of biological role, required for maturation of 30S ribosomal subunits. This Nitrosococcus oceani (strain ATCC 19707 / BCRC 17464 / JCM 30415 / NCIMB 11848 / C-107) protein is Ribosome maturation factor RimP.